The following is a 167-amino-acid chain: MTREEKSIAIENLTAQLAGTNIIYISDISGLNAETTSNLRRACFKAGIKLEVVKNTLLAKAMEASSNDYGDLPTVLSGNSAIFISDVANAPGKIIKDFRKKSDKPVLKGAYINSEVYIGDNQLDALATIKSKEELIGEIIGLLQSPAQRIISALQNKFAGSEEEGAE.

Belongs to the universal ribosomal protein uL10 family. As to quaternary structure, part of the ribosomal stalk of the 50S ribosomal subunit. The N-terminus interacts with L11 and the large rRNA to form the base of the stalk. The C-terminus forms an elongated spine to which L12 dimers bind in a sequential fashion forming a multimeric L10(L12)X complex.

Its function is as follows. Forms part of the ribosomal stalk, playing a central role in the interaction of the ribosome with GTP-bound translation factors. The sequence is that of Large ribosomal subunit protein uL10 from Flavobacterium johnsoniae (strain ATCC 17061 / DSM 2064 / JCM 8514 / BCRC 14874 / CCUG 350202 / NBRC 14942 / NCIMB 11054 / UW101) (Cytophaga johnsonae).